A 77-amino-acid polypeptide reads, in one-letter code: Small ribosomal subunit protein bS16 (77 aa).

The protein belongs to the bacterial ribosomal protein bS16 family.

This is Small ribosomal subunit protein bS16 from Wolinella succinogenes (strain ATCC 29543 / DSM 1740 / CCUG 13145 / JCM 31913 / LMG 7466 / NCTC 11488 / FDC 602W) (Vibrio succinogenes).